A 583-amino-acid chain; its full sequence is Asparagine synthetase, root [glutamine-hydrolyzing] (583 aa).

Cysteine 2 functions as the For GATase activity in the catalytic mechanism. Residues 2–185 (CGILAVLGCS…PGHLYSSKDS (184 aa)) form the Glutamine amidotransferase type-2 domain. L-glutamine contacts are provided by residues 50–54 (RLAIV), 75–77 (NGE), and aspartate 98. Residues leucine 231, valine 267, and 341-342 (SG) each bind ATP. The Asparagine synthetase domain occupies 237-516 (DSSLVASITS…PQNSARLTVP (280 aa)).

In terms of tissue distribution, roots.

The catalysed reaction is L-aspartate + L-glutamine + ATP + H2O = L-asparagine + L-glutamate + AMP + diphosphate + H(+). Its pathway is amino-acid biosynthesis; L-asparagine biosynthesis; L-asparagine from L-aspartate (L-Gln route): step 1/1. The sequence is that of Asparagine synthetase, root [glutamine-hydrolyzing] (AS2) from Pisum sativum (Garden pea).